The chain runs to 257 residues: Snake venom serine protease KN8 (257 aa).

The N-terminal stretch at 1–18 (MVLIRVLANLLILQLSYA) is a signal peptide. A propeptide spanning residues 19-24 (QKSSEL) is cleaved from the precursor. Residues 25–248 (VVGGLPCNIN…HLDWIKSIIA (224 aa)) enclose the Peptidase S1 domain. Disulfide bonds link C31/C162, C49/C65, C141/C209, C173/C188, and C199/C224. H64 (charge relay system) is an active-site residue. N-linked (GlcNAc...) asparagine glycosylation occurs at N102. Residue D109 is the Charge relay system of the active site. N-linked (GlcNAc...) asparagine glycosylation is found at N120 and N121. S203 (charge relay system) is an active-site residue.

This sequence belongs to the peptidase S1 family. Snake venom subfamily. In terms of assembly, monomer. Expressed by the venom gland.

Its subcellular location is the secreted. In terms of biological role, snake venom serine protease that may act in the hemostasis system of the prey. This Trimeresurus stejnegeri (Chinese green tree viper) protein is Snake venom serine protease KN8.